A 1957-amino-acid polypeptide reads, in one-letter code: [F-actin]-monooxygenase MICAL2 (1957 aa).

The interval 2–494 (GENEDEKQAQ…KHLYITKELE (493 aa)) is monooxygenase domain. Residues Cys97, 116–118 (EKR), 123–125 (RNN), Phe183, Tyr298, and Asp398 each bind FAD. The 104-residue stretch at 516–619 (DIRPSKLLTW…MVMYLSKFYE (104 aa)) folds into the Calponin-homology (CH) domain. The residue at position 631 (Ser631) is a Phosphoserine. Residues 660–681 (RKRTPRVDGQTGENDMNKRRRK) carry the Nuclear localization signal motif. 2 disordered regions span residues 660–714 (RKRT…NQNK) and 886–942 (QNKL…HPSH). A compositionally biased stretch (polar residues) spans 687 to 714 (DEPSNFSSRSLGSNQECGSSKEGGNQNK). Over residues 899–910 (PPSPPSRLPSPD) the composition is skewed to pro residues. Residues 911-925 (PAASSSPSTVDSASP) are compositionally biased toward low complexity. The LIM zinc-binding domain occupies 1000–1062 (DTCYFCKKRV…KPHFIHCKTN (63 aa)). Zn(2+)-binding residues include Cys1002, Cys1005, His1023, Cys1026, Cys1029, Cys1032, Cys1052, and His1055. Disordered regions lie at residues 1070–1143 (AELK…PSEW), 1168–1243 (SEDS…TPSK), 1258–1345 (VNKR…LYLP), 1361–1431 (GEDG…EGGP), 1467–1626 (KAGE…SPPC), and 1675–1779 (ESRQ…KEKK). Residues 1185-1195 (SHTEPCEEKPW) are compositionally biased toward basic and acidic residues. Polar residues predominate over residues 1232–1243 (RANSFQSPTPSK). The segment covering 1275 to 1294 (LPSSSSHSSSPPSSSSTSVS) has biased composition (low complexity). Positions 1302–1316 (SPPQMTASEPLSQVS) are enriched in polar residues. The segment at 1324–1363 (TPNFRRRAVAQGAPREIPLYLPHHPKPEWAEYCLVSPGED) is interaction with MAPK1. 2 stretches are compositionally biased toward basic and acidic residues: residues 1388-1402 (SNHR…KDRS) and 1413-1431 (GEDR…EGGP). Positions 1485–1496 (VLKPVRPLLLPR) are enriched in low complexity. Residues 1552–1562 (GGKKAWAKQES) show a composition bias toward basic and acidic residues. Polar residues predominate over residues 1570 to 1579 (CTRSFSLRKT). Ser1688 carries the post-translational modification Phosphoserine. Pro residues predominate over residues 1718–1733 (APPPPPPPPPPPPPPT). Positions 1751–1762 (ASSSASSTSSSS) are enriched in low complexity. In terms of domain architecture, bMERB spans 1796–1945 (KQEELKRLYK…EKAEDQHFES (150 aa)).

Belongs to the Mical family. In terms of assembly, interacts with PLXNA4. Interacts with RAB1B. Interacts with MAPK1/ERK2. Interacts with RAB35, RAB8A, RAB10, RAB13 and RAB15 (in their GTP-bound forms); binding to RAB35 is of low affinity compared to other Rab proteins; at least in case of RAB8A may bind 2 molecules of RAB8A simultaneously through a high and a low affinity binding site, respectively. May interact with MAPK1/ERK2. Interacts with CORO1C; this interaction recruits MICAL2 to the actin filaments. FAD is required as a cofactor.

The protein resides in the nucleus. It localises to the cytoplasm. It carries out the reaction L-methionyl-[F-actin] + NADPH + O2 + H(+) = L-methionyl-(R)-S-oxide-[F-actin] + NADP(+) + H2O. Its activity is regulated as follows. Specifically inhibited by CCG-1423, a small molecule inhibitor of SRF:MKL1/MRTF-A-dependent transcription. Its function is as follows. Methionine monooxygenase that promotes depolymerization of F-actin by mediating oxidation of residues 'Met-44' and 'Met-47' on actin to form methionine-sulfoxide, resulting in actin filament disassembly and preventing repolymerization. Regulates the disassembly of branched actin networks also by oxidizing ARP3B-containing ARP2/3 complexes leading to ARP3B dissociation from the network. Acts as a key regulator of the SRF signaling pathway elicited by nerve growth factor and serum: mediates oxidation and subsequent depolymerization of nuclear actin, leading to increase MKL1/MRTF-A presence in the nucleus and promote SRF:MKL1/MRTF-A-dependent gene transcription. Does not activate SRF:MKL1/MRTF-A through RhoA. The polypeptide is [F-actin]-monooxygenase MICAL2 (Homo sapiens (Human)).